The sequence spans 67 residues: uncharacterized protein (67 aa).

A coiled-coil region spans residues 17–47 (AASLQELEKKINTQIENNKAIMLRVKSVSHQ).

This is an uncharacterized protein from Bacillus subtilis (strain 168).